The following is a 154-amino-acid chain: Large ribosomal subunit protein uL13 (154 aa).

It belongs to the universal ribosomal protein uL13 family. In terms of assembly, part of the 50S ribosomal subunit.

In terms of biological role, this protein is one of the early assembly proteins of the 50S ribosomal subunit, although it is not seen to bind rRNA by itself. It is important during the early stages of 50S assembly. This chain is Large ribosomal subunit protein uL13, found in Brucella canis (strain ATCC 23365 / NCTC 10854 / RM-666).